The primary structure comprises 206 residues: Alpha-S1-casein (206 aa).

An N-terminal signal peptide occupies residues 1–15 (MKLLIFICLAAVALA). Residues Ser33, Ser77, Ser78, Ser79, Ser80, Ser81, Ser82, and Ser89 each carry the phosphoserine modification. The tract at residues 67-106 (HGMEGHEQRGSSSSSSEEVVGNSAEQKHVQKEEDVPSQSY) is disordered. Positions 91-100 (EQKHVQKEED) are enriched in basic and acidic residues.

This sequence belongs to the alpha-casein family. As to expression, mammary gland specific. Secreted in milk.

It localises to the secreted. In terms of biological role, important role in the capacity of milk to transport calcium phosphate. The sequence is that of Alpha-S1-casein (CSN1S1) from Sus scrofa (Pig).